Reading from the N-terminus, the 650-residue chain is DNA gyrase subunit B (650 aa).

Positions 429-543 (NELFIVEGDS…AGYVYIAQPP (115 aa)) constitute a Toprim domain. Positions 435, 508, and 510 each coordinate Mg(2+).

This sequence belongs to the type II topoisomerase GyrB family. Heterotetramer, composed of two GyrA and two GyrB chains. In the heterotetramer, GyrA contains the active site tyrosine that forms a transient covalent intermediate with DNA, while GyrB binds cofactors and catalyzes ATP hydrolysis. It depends on Mg(2+) as a cofactor. Requires Mn(2+) as cofactor. Ca(2+) is required as a cofactor.

It is found in the cytoplasm. The enzyme catalyses ATP-dependent breakage, passage and rejoining of double-stranded DNA.. Its function is as follows. A type II topoisomerase that negatively supercoils closed circular double-stranded (ds) DNA in an ATP-dependent manner to modulate DNA topology and maintain chromosomes in an underwound state. Negative supercoiling favors strand separation, and DNA replication, transcription, recombination and repair, all of which involve strand separation. Also able to catalyze the interconversion of other topological isomers of dsDNA rings, including catenanes and knotted rings. Type II topoisomerases break and join 2 DNA strands simultaneously in an ATP-dependent manner. This Streptococcus pyogenes serotype M3 (strain ATCC BAA-595 / MGAS315) protein is DNA gyrase subunit B.